We begin with the raw amino-acid sequence, 459 residues long: Probable 3-ketoacyl-CoA synthase 14 (459 aa).

Positions 1–25 (MFIAMADFKLLLLILILLSLFELDL) are cleaved as a signal peptide. A helical membrane pass occupies residues 32–52 (FFSPFPVKIGLLLISIFFYAY). One can recognise an FAE domain in the interval 52 to 334 (YSTTRSKPVY…FILFLVKSKL (283 aa)). Active-site residues include histidine 268, histidine 352, histidine 356, histidine 385, and asparagine 389.

This sequence belongs to the thiolase-like superfamily. Chalcone/stilbene synthases family. As to expression, expressed in siliques.

Its subcellular location is the membrane. It carries out the reaction a very-long-chain acyl-CoA + malonyl-CoA + H(+) = a very-long-chain 3-oxoacyl-CoA + CO2 + CoA. It functions in the pathway lipid metabolism; fatty acid biosynthesis. In Arabidopsis thaliana (Mouse-ear cress), this protein is Probable 3-ketoacyl-CoA synthase 14.